We begin with the raw amino-acid sequence, 454 residues long: MSHNDTIVAQATPPGRGGVGILRISGLKARDVAQEVLGKLPKPRYADYLPFKDVDGSALDQGIALWFPGPNSFTGEDVLELQGHGGPVILDLLLKRILTLPGVRIARPGEFSERAFLNDKLDLAQAEAIADLIDASSEQAARSALNSLQGAFSARVNHLVEALTHLRIYVEAAIDFPDEEIDFLSDGKIEAQLNGVIADLDAVRTEARQGSLLREGMKVVIAGRPNAGKSSLLNALAGREAAIVTDIAGTTRDVLREHIHIDGMPLHIIDTAGLRDASDEVERIGIERAWQEIEQADRVLFMVDGTTTDAVDPADIWPDFIARLPKNLPITVVRNKADITGETLGISEVNGHSLVRLSARTGEGVDVLRNHLKQSMGFDTNMEGGFLARRRHLQALAEAAEHLEQGKAQLLGAWAGELLAEELRLAQQSLSEITGEFTSDDLLGRIFSSFCIGK.

Positions 23, 80, and 120 each coordinate (6S)-5-formyl-5,6,7,8-tetrahydrofolate. Residues 216–377 (GMKVVIAGRP…LRNHLKQSMG (162 aa)) enclose the TrmE-type G domain. Asparagine 226 serves as a coordination point for K(+). Residues 226-231 (NAGKSS), 245-251 (TDIAGTT), 270-273 (DTAG), 335-338 (NKAD), and 358-360 (SAR) each bind GTP. Serine 230 lines the Mg(2+) pocket. Residues threonine 245, isoleucine 247, and threonine 250 each contribute to the K(+) site. Mg(2+) is bound at residue threonine 251. Lysine 454 is a (6S)-5-formyl-5,6,7,8-tetrahydrofolate binding site.

The protein belongs to the TRAFAC class TrmE-Era-EngA-EngB-Septin-like GTPase superfamily. TrmE GTPase family. Homodimer. Heterotetramer of two MnmE and two MnmG subunits. The cofactor is K(+).

Its subcellular location is the cytoplasm. In terms of biological role, exhibits a very high intrinsic GTPase hydrolysis rate. Involved in the addition of a carboxymethylaminomethyl (cmnm) group at the wobble position (U34) of certain tRNAs, forming tRNA-cmnm(5)s(2)U34. In Salmonella choleraesuis (strain SC-B67), this protein is tRNA modification GTPase MnmE.